A 578-amino-acid chain; its full sequence is V-type ATP synthase alpha chain (578 aa).

Position 228–235 (228–235 (GPFGSGKT)) interacts with ATP.

It belongs to the ATPase alpha/beta chains family.

It carries out the reaction ATP + H2O + 4 H(+)(in) = ADP + phosphate + 5 H(+)(out). Its function is as follows. Produces ATP from ADP in the presence of a proton gradient across the membrane. The V-type alpha chain is a catalytic subunit. The polypeptide is V-type ATP synthase alpha chain (Thermus thermophilus (strain ATCC BAA-163 / DSM 7039 / HB27)).